We begin with the raw amino-acid sequence, 701 residues long: Elongation factor G (701 aa).

Positions 11-287 (TKVRNIGIMA…AVIDYLPSPL (277 aa)) constitute a tr-type G domain. GTP is bound by residues 20–27 (AHIDAGKT), 84–88 (DTPGH), and 138–141 (NKMD).

Belongs to the TRAFAC class translation factor GTPase superfamily. Classic translation factor GTPase family. EF-G/EF-2 subfamily.

It is found in the cytoplasm. In terms of biological role, catalyzes the GTP-dependent ribosomal translocation step during translation elongation. During this step, the ribosome changes from the pre-translocational (PRE) to the post-translocational (POST) state as the newly formed A-site-bound peptidyl-tRNA and P-site-bound deacylated tRNA move to the P and E sites, respectively. Catalyzes the coordinated movement of the two tRNA molecules, the mRNA and conformational changes in the ribosome. The sequence is that of Elongation factor G from Mycobacterium ulcerans (strain Agy99).